The sequence spans 953 residues: Translation initiation factor IF-2 (953 aa).

Disordered stretches follow at residues 51-242 and 279-363; these read SKAS…QEAK and TKLK…TERK. Basic and acidic residues-rich tracts occupy residues 80-89 and 98-111; these read TGSEHVEKTQ and FKAE…EQAA. A compositionally biased stretch (polar residues) spans 131 to 140; that stretch reads QPNNHQTNEQ. The span at 149-188 shows a compositional bias: basic and acidic residues; sequence SQGDTNDKRIERKASNVSPRHDNHQLVGDRNRSFAKENHK. Positions 191 to 207 are enriched in polar residues; sequence RFTNQKKQGRQEPQSKS. Residues 229–242 show a composition bias toward basic and acidic residues; the sequence is RQSETRFRAQQEAK. Residues 282–291 show a composition bias toward polar residues; that stretch reads KSSNISAKST. A compositionally biased stretch (basic and acidic residues) spans 300–317; the sequence is ARPEKNRELTHHSQEGQK. A compositionally biased stretch (low complexity) spans 322–338; the sequence is SWNSQNQVRNQKNSNWN. Basic residues predominate over residues 339–348; the sequence is KNKKTKKGKN. The tr-type G domain maps to 454-623; the sequence is ERAPVVTIMG…LLVAEVEELK (170 aa). Residues 463 to 470 form a G1 region; that stretch reads GHVDHGKT. Residue 463 to 470 coordinates GTP; that stretch reads GHVDHGKT. The segment at 488 to 492 is G2; the sequence is GITQH. A G3 region spans residues 509-512; sequence DTPG. Residues 509 to 513 and 563 to 566 contribute to the GTP site; these read DTPGH and NKID. The interval 563 to 566 is G4; the sequence is NKID. Positions 599–601 are G5; sequence SAK.

Belongs to the TRAFAC class translation factor GTPase superfamily. Classic translation factor GTPase family. IF-2 subfamily.

It is found in the cytoplasm. Its function is as follows. One of the essential components for the initiation of protein synthesis. Protects formylmethionyl-tRNA from spontaneous hydrolysis and promotes its binding to the 30S ribosomal subunits. Also involved in the hydrolysis of GTP during the formation of the 70S ribosomal complex. This chain is Translation initiation factor IF-2, found in Streptococcus pyogenes serotype M49 (strain NZ131).